The primary structure comprises 344 residues: uncharacterized protein (344 aa).

The first 28 residues, 1 to 28 (MNKKSLNIVATLGILLVLAFSGCVDQSA), serve as a signal peptide directing secretion.

Belongs to the bacterial solute-binding protein 1 family. WtpA subfamily.

This is an uncharacterized protein from Methanococcus maripaludis (strain C7 / ATCC BAA-1331).